The following is a 644-amino-acid chain: Exoribonuclease 2 (644 aa).

The region spanning 189–516 is the RNB domain; that stretch reads REDLTALDFV…NHRLLKAVIK (328 aa). Positions 561–643 constitute an S1 motif domain; it reads DTRFAAEIVD…ETRSIIARPV (83 aa).

It belongs to the RNR ribonuclease family. RNase II subfamily.

It is found in the cytoplasm. It catalyses the reaction Exonucleolytic cleavage in the 3'- to 5'-direction to yield nucleoside 5'-phosphates.. In terms of biological role, involved in mRNA degradation. Hydrolyzes single-stranded polyribonucleotides processively in the 3' to 5' direction. This is Exoribonuclease 2 from Shigella dysenteriae serotype 1 (strain Sd197).